The chain runs to 110 residues: MEALSRHRTARISPQKCRLVADQIRGLNVAAALDLLTFSNKKAAGLVKKVLQAAIANAEHNEGADVDELRVKTVFVDEGPVLKRMSPRAKGRANRILKRTSHITVLVSDN.

The protein belongs to the universal ribosomal protein uL22 family. As to quaternary structure, part of the 50S ribosomal subunit.

Its function is as follows. This protein binds specifically to 23S rRNA; its binding is stimulated by other ribosomal proteins, e.g. L4, L17, and L20. It is important during the early stages of 50S assembly. It makes multiple contacts with different domains of the 23S rRNA in the assembled 50S subunit and ribosome. The globular domain of the protein is located near the polypeptide exit tunnel on the outside of the subunit, while an extended beta-hairpin is found that lines the wall of the exit tunnel in the center of the 70S ribosome. The chain is Large ribosomal subunit protein uL22 from Methylococcus capsulatus (strain ATCC 33009 / NCIMB 11132 / Bath).